A 70-amino-acid polypeptide reads, in one-letter code: Protein SlyX homolog (70 aa).

Belongs to the SlyX family.

This is Protein SlyX homolog from Shewanella woodyi (strain ATCC 51908 / MS32).